A 591-amino-acid chain; its full sequence is Aspartate--tRNA ligase (591 aa).

Position 176 (Glu176) interacts with L-aspartate. Positions 200–203 are aspartate; sequence QILK. L-aspartate is bound at residue Arg222. Residues 222-224 and Gln231 each bind ATP; that span reads RDE. His450 provides a ligand contact to L-aspartate. Residue Glu484 participates in ATP binding. Arg491 is a binding site for L-aspartate. Residue 536-539 participates in ATP binding; sequence GLDR.

Belongs to the class-II aminoacyl-tRNA synthetase family. Type 1 subfamily. Homodimer.

The protein localises to the cytoplasm. It catalyses the reaction tRNA(Asp) + L-aspartate + ATP = L-aspartyl-tRNA(Asp) + AMP + diphosphate. Functionally, catalyzes the attachment of L-aspartate to tRNA(Asp) in a two-step reaction: L-aspartate is first activated by ATP to form Asp-AMP and then transferred to the acceptor end of tRNA(Asp). In Listeria monocytogenes serotype 4a (strain HCC23), this protein is Aspartate--tRNA ligase.